The chain runs to 295 residues: Pyridoxal 5'-phosphate synthase subunit PdxS (295 aa).

D-ribose 5-phosphate is bound at residue Asp25. Lys82 (schiff-base intermediate with D-ribose 5-phosphate) is an active-site residue. Gly154 is a binding site for D-ribose 5-phosphate. Arg166 serves as a coordination point for D-glyceraldehyde 3-phosphate. Residues Gly215 and 236 to 237 (GS) each bind D-ribose 5-phosphate.

It belongs to the PdxS/SNZ family. In the presence of PdxT, forms a dodecamer of heterodimers.

The enzyme catalyses aldehydo-D-ribose 5-phosphate + D-glyceraldehyde 3-phosphate + L-glutamine = pyridoxal 5'-phosphate + L-glutamate + phosphate + 3 H2O + H(+). The protein operates within cofactor biosynthesis; pyridoxal 5'-phosphate biosynthesis. Its function is as follows. Catalyzes the formation of pyridoxal 5'-phosphate from ribose 5-phosphate (RBP), glyceraldehyde 3-phosphate (G3P) and ammonia. The ammonia is provided by the PdxT subunit. Can also use ribulose 5-phosphate and dihydroxyacetone phosphate as substrates, resulting from enzyme-catalyzed isomerization of RBP and G3P, respectively. In Listeria monocytogenes serotype 4b (strain CLIP80459), this protein is Pyridoxal 5'-phosphate synthase subunit PdxS.